We begin with the raw amino-acid sequence, 204 residues long: MMRTLITTHPLLLLLLLQQLLQPVQFQEVDTDFDSPEDKMEEFREYLEEFRRTGPTRPPTKEKVERRVIIEPGMPLYHRDYCNEEIMRKNVYHKQRCVTEHYFLLMQYDELEKICYNRFVPCKNGVRKCNRSKGLVEGVYCNLTEAFKIPRCKYKSFYRRGYVLITCAWQNEIHKLIPHTINDLVEPPKHRSFLNEDGVFVILP.

An N-terminal signal peptide occupies residues 1-26; the sequence is MMRTLITTHPLLLLLLLQQLLQPVQF. 3 disulfides stabilise this stretch: cysteine 97/cysteine 152, cysteine 115/cysteine 167, and cysteine 122/cysteine 129. N-linked (GlcNAc...) asparagine glycosylation is found at asparagine 130 and asparagine 142.

This sequence belongs to the pancreatic ribonuclease family.

Its subcellular location is the secreted. In terms of biological role, does not exhibit any ribonuclease activity. In Macaca mulatta (Rhesus macaque), this protein is Inactive ribonuclease-like protein 9 (RNASE9).